The chain runs to 180 residues: Cytokinin-beta-glucosidase (180 aa).

As to expression, accumulates in young leaves and shoot tips.

Its function is as follows. Hydrolyzes cytokinin glucosides thus liberating free cytokinins. This Nicotiana tabacum (Common tobacco) protein is Cytokinin-beta-glucosidase (TROLC).